Here is a 352-residue protein sequence, read N- to C-terminus: Popeye domain-containing protein 1 (352 aa).

Residues 1–38 (MSNTTSALPSSVPAVSLDPNATLCQDWEQSHHLLFHLA) are Extracellular-facing. N3 and N20 each carry an N-linked (GlcNAc...) asparagine glycan. The chain crosses the membrane as a helical span at residues 39-59 (NLSLGLGFLIPTTLALHMIFL). Residue R60 is a topological domain, cytoplasmic. Residues 61 to 81 (LLLMTGCSLFIAWATLYRCTL) traverse the membrane as a helical segment. A topological domain (extracellular) is located at residue D82. The helical transmembrane segment at 83–103 (VMVWNVVFLLVNFMHFFFLLY) threads the bilayer. The Cytoplasmic segment spans residues 104-352 (KRRPIKIDRE…NVSKTTKKDI (249 aa)). A disordered region spans residues 299–352 (ILRGGSTGSSLQKNPLTKTSTTMKPIEEGLEDDVFESESPTTSQNVSKTTKKDI). 2 stretches are compositionally biased toward polar residues: residues 306–321 (GSSL…STTM) and 336–346 (ESPTTSQNVSK).

It belongs to the popeye family. As to expression, expressed in skeletal muscle (at protein level).

The protein resides in the lateral cell membrane. It localises to the cell junction. Its subcellular location is the tight junction. It is found in the membrane. The protein localises to the cell membrane. The protein resides in the sarcolemma. It localises to the caveola. Functionally, cell adhesion molecule involved in the establishment and/or maintenance of cell integrity. Involved in skeletal muscle and heart development as well as in the maintenance of heart function. May play a role in vamp3-mediated vesicular transport and recycling of receptor molecules. Involved in the formation and regulation of the tight junction (TJ) paracellular permeability barrier in epithelial cells. May induce primordial adhesive contact and aggregation of epithelial cells in a Ca(2+)-independent manner. May be involved in epithelial movement during corneal sheet formation and regeneration. May play a role in the regulation of cell shape and movement by modulating the Rho-GTPase activity. May also be involved in striated muscle regeneration and in the regulation of cell spreading. This Danio rerio (Zebrafish) protein is Popeye domain-containing protein 1 (popdc1).